Reading from the N-terminus, the 232-residue chain is Ribonuclease HII (232 aa).

Residues 26–218 (RILCGVDEAG…VRRALEGMSA (193 aa)) form the RNase H type-2 domain. 3 residues coordinate a divalent metal cation: aspartate 32, glutamate 33, and aspartate 127.

It belongs to the RNase HII family. It depends on Mn(2+) as a cofactor. Mg(2+) is required as a cofactor.

The protein localises to the cytoplasm. It carries out the reaction Endonucleolytic cleavage to 5'-phosphomonoester.. In terms of biological role, endonuclease that specifically degrades the RNA of RNA-DNA hybrids. This chain is Ribonuclease HII, found in Ralstonia pickettii (strain 12J).